A 485-amino-acid polypeptide reads, in one-letter code: Glutamate--tRNA ligase (485 aa).

The 'HIGH' region motif lies at 12 to 22; it reads PSPTGEPHVGT. The 'KMSKS' region signature appears at 253-257; the sequence is KLSKR. Lys256 provides a ligand contact to ATP.

It belongs to the class-I aminoacyl-tRNA synthetase family. Glutamate--tRNA ligase type 1 subfamily. As to quaternary structure, monomer.

Its subcellular location is the cytoplasm. The enzyme catalyses tRNA(Glu) + L-glutamate + ATP = L-glutamyl-tRNA(Glu) + AMP + diphosphate. Its function is as follows. Catalyzes the attachment of glutamate to tRNA(Glu) in a two-step reaction: glutamate is first activated by ATP to form Glu-AMP and then transferred to the acceptor end of tRNA(Glu). This is Glutamate--tRNA ligase from Sinorhizobium medicae (strain WSM419) (Ensifer medicae).